The sequence spans 521 residues: MLQRSLGVNGRKLAMSARSAKRERKNASTAASKCYVVPPSARGWVHAYSVTATSMLNRRKAILDYLQGAVWVLPTFGVAIGLGSGAVLSMIPVKSGTLIDKLMFQGTPGDARGVLIVVSATMITTIGIVFSLTVLSLQIASSQFSVRLLRTFLRDVPNQVVLAIFACTFAYSTGGLHTVGEHRDGGAFIPKVAVTGSLALAFVSIAALIYFLHHLMHSIQIDTIMDKVRLRTLGLVDQLYPESDTADRQVETPPSPPADAVPLLAPHSGYLQTVDVDDIAELAAASRYTALLVTFVGDYVTAGGLLGWCWRRGTAPGAPGSDFPQRCLRHVHIGFERTLQQDIRFGLRQMVDIALRALSPALNDPYTAIQVVHHLSAVESVLASRALPDDVRRDRAGELLFWLPYPSFATYLHVGCAQIRRYGSREPLVLTALLQLLSAVAQNCVDPSRRVAVQTQIALVVRAAQREFADESDRAMVLGAAARATEVVERPGTLAPPPSTFGQVAAAQAAASTIRSADRDG.

Positions 1–25 are disordered; the sequence is MLQRSLGVNGRKLAMSARSAKRERK. 6 helical membrane-spanning segments follow: residues 68–88, 114–134, 160–180, 192–212, 290–310, and 399–419; these read GAVWVLPTFGVAIGLGSGAVL, VLIVVSATMITTIGIVFSLTV, VVLAIFACTFAYSTGGLHTVG, VAVTGSLALAFVSIAALIYFL, ALLVTFVGDYVTAGGLLGWCW, and LLFWLPYPSFATYLHVGCAQI.

It localises to the cell membrane. This is an uncharacterized protein from Mycobacterium bovis (strain ATCC BAA-935 / AF2122/97).